The following is a 107-amino-acid chain: Thiosulfate sulfurtransferase GlpE (107 aa).

The region spanning 17-101 is the Rhodanese domain; it reads AAGAARLVDI…GFEAWRREFP (85 aa). Cys65 (cysteine persulfide intermediate) is an active-site residue.

It belongs to the GlpE family.

The protein localises to the cytoplasm. It catalyses the reaction thiosulfate + hydrogen cyanide = thiocyanate + sulfite + 2 H(+). It carries out the reaction thiosulfate + [thioredoxin]-dithiol = [thioredoxin]-disulfide + hydrogen sulfide + sulfite + 2 H(+). Its function is as follows. Transferase that catalyzes the transfer of sulfur from thiosulfate to thiophilic acceptors such as cyanide or dithiols. May function in a CysM-independent thiosulfate assimilation pathway by catalyzing the conversion of thiosulfate to sulfite, which can then be used for L-cysteine biosynthesis. This Aeromonas hydrophila subsp. hydrophila (strain ATCC 7966 / DSM 30187 / BCRC 13018 / CCUG 14551 / JCM 1027 / KCTC 2358 / NCIMB 9240 / NCTC 8049) protein is Thiosulfate sulfurtransferase GlpE.